The primary structure comprises 392 residues: Probable protein phosphatase 2C 78 (392 aa).

Positions 39–342 (ASGEYSIAVA…DDITVVVVYL (304 aa)) constitute a PPM-type phosphatase domain. Asp73, Gly74, Asp274, and Asp333 together coordinate Mn(2+).

This sequence belongs to the PP2C family. Requires Mg(2+) as cofactor. Mn(2+) is required as a cofactor.

The catalysed reaction is O-phospho-L-seryl-[protein] + H2O = L-seryl-[protein] + phosphate. It carries out the reaction O-phospho-L-threonyl-[protein] + H2O = L-threonyl-[protein] + phosphate. This is Probable protein phosphatase 2C 78 from Oryza sativa subsp. japonica (Rice).